Reading from the N-terminus, the 272-residue chain is 3-methyl-2-oxobutanoate hydroxymethyltransferase (272 aa).

Residues Asp42 and Asp86 each coordinate Mg(2+). 3-methyl-2-oxobutanoate contacts are provided by residues 42 to 43 (DS), Asp86, and Lys116. A Mg(2+)-binding site is contributed by Glu118. Residue Glu185 is the Proton acceptor of the active site. The segment at 251–272 (LKEQRDQRATPTTPPPPPAPDC) is disordered. The span at 262–272 (TTPPPPPAPDC) shows a compositional bias: pro residues.

Belongs to the PanB family. Homodecamer; pentamer of dimers. It depends on Mg(2+) as a cofactor.

Its subcellular location is the cytoplasm. It catalyses the reaction 3-methyl-2-oxobutanoate + (6R)-5,10-methylene-5,6,7,8-tetrahydrofolate + H2O = 2-dehydropantoate + (6S)-5,6,7,8-tetrahydrofolate. Its pathway is cofactor biosynthesis; (R)-pantothenate biosynthesis; (R)-pantoate from 3-methyl-2-oxobutanoate: step 1/2. Catalyzes the reversible reaction in which hydroxymethyl group from 5,10-methylenetetrahydrofolate is transferred onto alpha-ketoisovalerate to form ketopantoate. The polypeptide is 3-methyl-2-oxobutanoate hydroxymethyltransferase (Synechococcus sp. (strain CC9311)).